Reading from the N-terminus, the 184-residue chain is ATP synthase subunit delta (184 aa).

The protein belongs to the ATPase delta chain family. In terms of assembly, F-type ATPases have 2 components, F(1) - the catalytic core - and F(0) - the membrane proton channel. F(1) has five subunits: alpha(3), beta(3), gamma(1), delta(1), epsilon(1). F(0) has three main subunits: a(1), b(2) and c(10-14). The alpha and beta chains form an alternating ring which encloses part of the gamma chain. F(1) is attached to F(0) by a central stalk formed by the gamma and epsilon chains, while a peripheral stalk is formed by the delta and b chains.

It localises to the cell inner membrane. In terms of biological role, f(1)F(0) ATP synthase produces ATP from ADP in the presence of a proton or sodium gradient. F-type ATPases consist of two structural domains, F(1) containing the extramembraneous catalytic core and F(0) containing the membrane proton channel, linked together by a central stalk and a peripheral stalk. During catalysis, ATP synthesis in the catalytic domain of F(1) is coupled via a rotary mechanism of the central stalk subunits to proton translocation. This protein is part of the stalk that links CF(0) to CF(1). It either transmits conformational changes from CF(0) to CF(1) or is implicated in proton conduction. This chain is ATP synthase subunit delta, found in Zymomonas mobilis subsp. mobilis (strain ATCC 31821 / ZM4 / CP4).